The following is a 505-amino-acid chain: Maturase K (505 aa).

It belongs to the intron maturase 2 family. MatK subfamily.

Its subcellular location is the plastid. The protein localises to the chloroplast. Functionally, usually encoded in the trnK tRNA gene intron. Probably assists in splicing its own and other chloroplast group II introns. The chain is Maturase K from Allamanda cathartica (Yellow allamanda).